The chain runs to 111 residues: Large ribosomal subunit protein uL22 (111 aa).

Belongs to the universal ribosomal protein uL22 family. As to quaternary structure, part of the 50S ribosomal subunit.

In terms of biological role, this protein binds specifically to 23S rRNA; its binding is stimulated by other ribosomal proteins, e.g. L4, L17, and L20. It is important during the early stages of 50S assembly. It makes multiple contacts with different domains of the 23S rRNA in the assembled 50S subunit and ribosome. The globular domain of the protein is located near the polypeptide exit tunnel on the outside of the subunit, while an extended beta-hairpin is found that lines the wall of the exit tunnel in the center of the 70S ribosome. The sequence is that of Large ribosomal subunit protein uL22 from Mycoplasma capricolum subsp. capricolum (strain California kid / ATCC 27343 / NCTC 10154).